The sequence spans 570 residues: Sulfite reductase [NADPH] hemoprotein beta-component (570 aa).

Positions 434, 440, 479, and 483 each coordinate [4Fe-4S] cluster. Cysteine 483 contacts siroheme.

It belongs to the nitrite and sulfite reductase 4Fe-4S domain family. In terms of assembly, alpha(8)-beta(8). The alpha component is a flavoprotein, the beta component is a hemoprotein. It depends on siroheme as a cofactor. [4Fe-4S] cluster serves as cofactor.

The enzyme catalyses hydrogen sulfide + 3 NADP(+) + 3 H2O = sulfite + 3 NADPH + 4 H(+). It participates in sulfur metabolism; hydrogen sulfide biosynthesis; hydrogen sulfide from sulfite (NADPH route): step 1/1. Component of the sulfite reductase complex that catalyzes the 6-electron reduction of sulfite to sulfide. This is one of several activities required for the biosynthesis of L-cysteine from sulfate. This Salmonella agona (strain SL483) protein is Sulfite reductase [NADPH] hemoprotein beta-component.